The chain runs to 1135 residues: WASH complex subunit 4 (1135 aa).

N-acetylalanine is present on alanine 2.

Belongs to the SWIP family. Probable component of the WASH complex.

This Dictyostelium discoideum (Social amoeba) protein is WASH complex subunit 4.